A 165-amino-acid chain; its full sequence is Small ribosomal subunit protein eS10 (165 aa).

The residue at position 12 (tyrosine 12) is a Phosphotyrosine. The tract at residues 92 to 165 (ATLRRSRPET…FGRGRGQPPQ (74 aa)) is disordered. Over residues 97 to 128 (SRPETGRPRPKGLEGERPARLTRGEADRDTYR) the composition is skewed to basic and acidic residues. Glycyl lysine isopeptide (Lys-Gly) (interchain with G-Cter in ubiquitin) cross-links involve residues lysine 138 and lysine 139. Serine 146 is subject to Phosphoserine. The residue at position 153 (arginine 153) is an Omega-N-methylarginine. Gly residues predominate over residues 154-165 (GGFGRGRGQPPQ). Residues arginine 158 and arginine 160 each carry the symmetric dimethylarginine modification.

This sequence belongs to the eukaryotic ribosomal protein eS10 family. In terms of assembly, component of the small ribosomal subunit. The methylated form interacts with NPM1. Methylated by PRMT5. Methylation is necessary for its interaction with NPS1, its localization in the granular component (GC) region of the nucleolus, for the proper assembly of ribosomes, protein synthesis and optimal cell proliferation. Post-translationally, monoubiquitinated by ZNF598 when a ribosome has stalled during translation of poly(A) sequences, leading to preclude synthesis of a long poly-lysine tail and initiate the ribosome quality control (RQC) pathway to degrade the potentially detrimental aberrant nascent polypeptide. Deubiquitinated by OTUD3 and USP21, antagonizing ZNF598 activity. Deubiquitinated by OTUD1, antagonizing ZNF598 activity and stimulating formation of polysomes: deubiquitination by OTUD1 promotes stability and translation of a subset mRNAs with a high abundance of rare codons can limit the translation rate. Deubiquitinated by USP10.

It localises to the cytoplasm. It is found in the nucleus. Its subcellular location is the nucleolus. Functionally, component of the 40S ribosomal subunit. The ribosome is a large ribonucleoprotein complex responsible for the synthesis of proteins in the cell. In Oryctolagus cuniculus (Rabbit), this protein is Small ribosomal subunit protein eS10 (RPS10).